Consider the following 337-residue polypeptide: Probable sulfurtransferase (337 aa).

Gly-83 is a binding site for ATP. Residues Cys-172 and Cys-175 each contribute to the [4Fe-4S] cluster site. Positions 179 and 206 each coordinate ATP. A [4Fe-4S] cluster-binding site is contributed by Cys-284.

Belongs to the TtcA family. [4Fe-4S] cluster is required as a cofactor. Requires Mg(2+) as cofactor.

The polypeptide is Probable sulfurtransferase (Methanocaldococcus jannaschii (strain ATCC 43067 / DSM 2661 / JAL-1 / JCM 10045 / NBRC 100440) (Methanococcus jannaschii)).